The sequence spans 80 residues: Large ribosomal subunit protein uL29 (80 aa).

This sequence belongs to the universal ribosomal protein uL29 family.

This is Large ribosomal subunit protein uL29 from Saccharopolyspora erythraea (strain ATCC 11635 / DSM 40517 / JCM 4748 / NBRC 13426 / NCIMB 8594 / NRRL 2338).